We begin with the raw amino-acid sequence, 149 residues long: uncharacterized protein (149 aa).

The chain crosses the membrane as a helical span at residues 12–31 (FKNLVIGAVSGVAAAYFLST).

It is found in the membrane. This is an uncharacterized protein from Streptococcus pyogenes serotype M6 (strain ATCC BAA-946 / MGAS10394).